We begin with the raw amino-acid sequence, 783 residues long: Polyribonucleotide nucleotidyltransferase 1, mitochondrial (783 aa).

The N-terminal 45 residues, 1 to 45 (MAACRLCCLCPCLRPLGCGPLGRPGRNRALSYLQMRALWSSTGSR), are a transit peptide targeting the mitochondrion. An N6-acetyllysine mark is found at Lys250, Lys264, and Lys285. Position 552 is an N6-succinyllysine (Lys552). Positions 605-664 (PVVETVKVPLSKRAKFVGPGGYHLKKLQAETGVTISQVDEETFSIFAPTPTAMHEARDFI) constitute a KH domain. An S1 motif domain is found at 679-750 (GAVYTATITE…ADGRMRLSRK (72 aa)). A Phosphoserine modification is found at Ser754.

The protein belongs to the polyribonucleotide nucleotidyltransferase family. In terms of assembly, homotrimer; in free form. Homooligomer. Component of the mitochondrial degradosome (mtEXO) complex which is a heteropentamer containing 2 copies of SUPV3L1 and 3 copies of PNPT1. As part of the mitochondrial degradosome complex, interacts with GRSF1 in an RNA-dependent manner; the interaction enhances the activity of the complex. Interacts with TCL1A; the interaction has no effect on PNPT1 exonuclease activity.

The protein resides in the cytoplasm. The protein localises to the mitochondrion matrix. Its subcellular location is the mitochondrion intermembrane space. It carries out the reaction RNA(n+1) + phosphate = RNA(n) + a ribonucleoside 5'-diphosphate. In terms of biological role, RNA-binding protein implicated in numerous RNA metabolic processes. Catalyzes the phosphorolysis of single-stranded polyribonucleotides processively in the 3'-to-5' direction. Mitochondrial intermembrane factor with RNA-processing exoribonulease activity. Component of the mitochondrial degradosome (mtEXO) complex, that degrades 3' overhang double-stranded RNA with a 3'-to-5' directionality in an ATP-dependent manner. Involved in the degradation of non-coding mitochondrial transcripts (MT-ncRNA) and tRNA-like molecules. Required for correct processing and polyadenylation of mitochondrial mRNAs. Plays a role as a cytoplasmic RNA import factor that mediates the translocation of small RNA components, like the 5S RNA, the RNA subunit of ribonuclease P and the mitochondrial RNA-processing (MRP) RNA, into the mitochondrial matrix. Plays a role in mitochondrial morphogenesis and respiration; regulates the expression of the electron transport chain (ETC) components at the mRNA and protein levels. In the cytoplasm, shows a 3'-to-5' exoribonuclease mediating mRNA degradation activity; degrades c-myc mRNA upon treatment with IFNB1/IFN-beta, resulting in a growth arrest in melanoma cells. Regulates the stability of specific mature miRNAs in melanoma cells; specifically and selectively degrades miR-221, preferentially. Also plays a role in RNA cell surveillance by cleaning up oxidized RNAs. Binds to the RNA subunit of ribonuclease P, MRP RNA and miR-221 microRNA. This is Polyribonucleotide nucleotidyltransferase 1, mitochondrial (Pnpt1) from Mus musculus (Mouse).